The chain runs to 316 residues: Daunorubicin resistance ATP-binding protein DrrA3 (316 aa).

In terms of domain architecture, ABC transporter spans isoleucine 6–leucine 236. ATP is bound at residue glycine 38–threonine 45.

This sequence belongs to the ABC transporter superfamily. Drug exporter-1 (DrugE1) (TC 3.A.1.105) family. In terms of assembly, the complex is probably composed of two ATP-binding proteins (DrrA3) and two transmembrane proteins (DrrB3).

Its subcellular location is the cell membrane. It carries out the reaction daunorubicin(in) + ATP + H2O = daunorubicin(out) + ADP + phosphate + H(+). In terms of biological role, part of the ABC transporter complex DrrA3B3 involved in daunorubicin efflux. Responsible for energy coupling to the transport system. Confers self-resistance to daunorubicin, an antibiotic produced by S.coeruleorubidus. The efficiency of DrrA3B3 to export daunorubicin is probably lower than that of DrrA1B1 or DrrA2B2. This is Daunorubicin resistance ATP-binding protein DrrA3 from Streptomyces coeruleorubidus.